The following is a 214-amino-acid chain: Glycerol-3-phosphate acyltransferase (214 aa).

The next 5 helical transmembrane spans lie at 4–24 (LIVA…IVSA), 52–72 (AAIL…WFVV), 82–102 (DTSV…PAFF), 118–138 (LAIN…VAFF), and 159–179 (FLFG…LLVW).

It belongs to the PlsY family. Probably interacts with PlsX.

It is found in the cell inner membrane. The catalysed reaction is an acyl phosphate + sn-glycerol 3-phosphate = a 1-acyl-sn-glycero-3-phosphate + phosphate. It participates in lipid metabolism; phospholipid metabolism. In terms of biological role, catalyzes the transfer of an acyl group from acyl-phosphate (acyl-PO(4)) to glycerol-3-phosphate (G3P) to form lysophosphatidic acid (LPA). This enzyme utilizes acyl-phosphate as fatty acyl donor, but not acyl-CoA or acyl-ACP. This is Glycerol-3-phosphate acyltransferase from Paraburkholderia xenovorans (strain LB400).